The primary structure comprises 159 residues: MNPVGINGTLIVQLVTFVILVALLYKYMYGPLRKVMDDRRAKIADGLAAAERGKEEMALAQKRATELLREAKDKAAEIIANAERRGVELREEAQGKAREEADRIIASARAEIDVETNRAREVLRGQVVELVVNGTQRILHREIDDQTHRDIIDRMVGQL.

Residues 4-24 (VGINGTLIVQLVTFVILVALL) form a helical membrane-spanning segment.

It belongs to the ATPase B chain family. As to quaternary structure, F-type ATPases have 2 components, F(1) - the catalytic core - and F(0) - the membrane proton channel. F(1) has five subunits: alpha(3), beta(3), gamma(1), delta(1), epsilon(1). F(0) has three main subunits: a(1), b(2) and c(10-14). The alpha and beta chains form an alternating ring which encloses part of the gamma chain. F(1) is attached to F(0) by a central stalk formed by the gamma and epsilon chains, while a peripheral stalk is formed by the delta and b chains.

It is found in the cell inner membrane. In terms of biological role, f(1)F(0) ATP synthase produces ATP from ADP in the presence of a proton or sodium gradient. F-type ATPases consist of two structural domains, F(1) containing the extramembraneous catalytic core and F(0) containing the membrane proton channel, linked together by a central stalk and a peripheral stalk. During catalysis, ATP synthesis in the catalytic domain of F(1) is coupled via a rotary mechanism of the central stalk subunits to proton translocation. Its function is as follows. Component of the F(0) channel, it forms part of the peripheral stalk, linking F(1) to F(0). The protein is ATP synthase subunit b of Acidithiobacillus ferrooxidans (strain ATCC 23270 / DSM 14882 / CIP 104768 / NCIMB 8455) (Ferrobacillus ferrooxidans (strain ATCC 23270)).